Reading from the N-terminus, the 359-residue chain is Phosphate acyltransferase (359 aa).

This sequence belongs to the PlsX family. In terms of assembly, homodimer. Probably interacts with PlsY.

It is found in the cytoplasm. The enzyme catalyses a fatty acyl-[ACP] + phosphate = an acyl phosphate + holo-[ACP]. It functions in the pathway lipid metabolism; phospholipid metabolism. Functionally, catalyzes the reversible formation of acyl-phosphate (acyl-PO(4)) from acyl-[acyl-carrier-protein] (acyl-ACP). This enzyme utilizes acyl-ACP as fatty acyl donor, but not acyl-CoA. This is Phosphate acyltransferase from Citrobacter koseri (strain ATCC BAA-895 / CDC 4225-83 / SGSC4696).